The following is a 188-amino-acid chain: Ribosome-recycling factor (188 aa).

It belongs to the RRF family.

It is found in the cytoplasm. Responsible for the release of ribosomes from messenger RNA at the termination of protein biosynthesis. May increase the efficiency of translation by recycling ribosomes from one round of translation to another. The polypeptide is Ribosome-recycling factor (Cereibacter sphaeroides (strain ATCC 17023 / DSM 158 / JCM 6121 / CCUG 31486 / LMG 2827 / NBRC 12203 / NCIMB 8253 / ATH 2.4.1.) (Rhodobacter sphaeroides)).